The sequence spans 433 residues: ATP-dependent protease ATPase subunit HslU (433 aa).

Residues Val-18, 60–65, Asp-246, Glu-311, and Arg-383 each bind ATP; that span reads GVGKTE.

This sequence belongs to the ClpX chaperone family. HslU subfamily. In terms of assembly, a double ring-shaped homohexamer of HslV is capped on each side by a ring-shaped HslU homohexamer. The assembly of the HslU/HslV complex is dependent on binding of ATP.

It localises to the cytoplasm. ATPase subunit of a proteasome-like degradation complex; this subunit has chaperone activity. The binding of ATP and its subsequent hydrolysis by HslU are essential for unfolding of protein substrates subsequently hydrolyzed by HslV. HslU recognizes the N-terminal part of its protein substrates and unfolds these before they are guided to HslV for hydrolysis. The chain is ATP-dependent protease ATPase subunit HslU from Nitrobacter winogradskyi (strain ATCC 25391 / DSM 10237 / CIP 104748 / NCIMB 11846 / Nb-255).